We begin with the raw amino-acid sequence, 892 residues long: DNA mismatch repair protein MutS (892 aa).

Residue 607-614 (GPNMSGKS) coordinates ATP. The disordered stretch occupies residues 826 to 854 (ETKAETEEESQLSFFGGEQSSKKQDKPVL). Over residues 845–854 (SSKKQDKPVL) the composition is skewed to basic and acidic residues.

It belongs to the DNA mismatch repair MutS family.

This protein is involved in the repair of mismatches in DNA. It is possible that it carries out the mismatch recognition step. This protein has a weak ATPase activity. This Bacillus cereus (strain AH187) protein is DNA mismatch repair protein MutS.